The sequence spans 279 residues: 1-(5-phosphoribosyl)-5-[(5-phosphoribosylamino)methylideneamino] imidazole-4-carboxamide isomerase (279 aa).

It belongs to the HisA/HisF family.

The protein localises to the cytoplasm. The enzyme catalyses 1-(5-phospho-beta-D-ribosyl)-5-[(5-phospho-beta-D-ribosylamino)methylideneamino]imidazole-4-carboxamide = 5-[(5-phospho-1-deoxy-D-ribulos-1-ylimino)methylamino]-1-(5-phospho-beta-D-ribosyl)imidazole-4-carboxamide. It functions in the pathway amino-acid biosynthesis; L-histidine biosynthesis; L-histidine from 5-phospho-alpha-D-ribose 1-diphosphate: step 4/9. This chain is 1-(5-phosphoribosyl)-5-[(5-phosphoribosylamino)methylideneamino] imidazole-4-carboxamide isomerase (HIS6), found in Candida albicans (Yeast).